The chain runs to 89 residues: Late cornified envelope protein 3A (89 aa).

2 stretches are compositionally biased toward low complexity: residues 1–10 (MSCQQNQQQC) and 17–46 (PAKS…SERS). Disordered regions lie at residues 1–46 (MSCQ…SERS) and 62–89 (CQSS…AGCC).

It belongs to the LCE family. As to quaternary structure, interacts with CYSRT1; the interaction is direct. Skin-specific. Expression was readily detected in adult trunk skin, adult arm skin, fetal skin, penal skin, vulva, esophagus and tongue. Not expressed in the cervix, rectum, lung, colon, or placenta.

Its function is as follows. A structural component of the cornified envelope of the stratum corneum involved in innate cutaneous host defense. Possesses defensin-like antimicrobial activity against a broad spectrum of Gram-positive and Gram-negative bacteria, both aerobic and anaerobic species. Upon inflammation, may regulate skin barrier repair by shaping cutaneous microbiota composition and immune response to bacterial antigens. The chain is Late cornified envelope protein 3A from Homo sapiens (Human).